A 332-amino-acid chain; its full sequence is Phosphatidylglycerol--prolipoprotein diacylglyceryl transferase (332 aa).

The next 3 helical transmembrane spans lie at 18–38 (FPYF…AYIL), 66–86 (FFTW…TMVY), and 111–131 (VGLR…GGGL). Arg-159 contributes to the a 1,2-diacyl-sn-glycero-3-phospho-(1'-sn-glycerol) binding site. The next 2 helical transmembrane spans lie at 249-269 (GFLV…IEYF) and 302-322 (ILCV…SAYH).

The protein belongs to the Lgt family.

It localises to the cell inner membrane. The enzyme catalyses L-cysteinyl-[prolipoprotein] + a 1,2-diacyl-sn-glycero-3-phospho-(1'-sn-glycerol) = an S-1,2-diacyl-sn-glyceryl-L-cysteinyl-[prolipoprotein] + sn-glycerol 1-phosphate + H(+). It participates in protein modification; lipoprotein biosynthesis (diacylglyceryl transfer). In terms of biological role, catalyzes the transfer of the diacylglyceryl group from phosphatidylglycerol to the sulfhydryl group of the N-terminal cysteine of a prolipoprotein, the first step in the formation of mature lipoproteins. This is Phosphatidylglycerol--prolipoprotein diacylglyceryl transferase from Treponema pallidum (strain Nichols).